The primary structure comprises 1053 residues: Focal adhesion kinase 1 (1053 aa).

The tract at residues 1–27 is disordered; it reads MAAAYLDPNLNHTPSSSAKTHLGTGME. Residues 10–19 show a composition bias toward polar residues; the sequence is LNHTPSSSAK. The FERM domain maps to 35 to 355; sequence RVLKVFHYFE…GYCRLVNGAT (321 aa). Residue Tyr-397 is modified to Phosphotyrosine; by autocatalysis. The residue at position 407 (Tyr-407) is a Phosphotyrosine. The region spanning 422–680 is the Protein kinase domain; it reads IELGRCIGEG…ELKAQLSTIL (259 aa). ATP-binding positions include 428-434, Lys-454, and 500-502; these read IGEGQFG and ELC. Catalysis depends on Asp-546, which acts as the Proton acceptor. A phosphotyrosine; by SRC mark is found at Tyr-576 and Tyr-577. The span at 686-697 shows a compositional bias: basic and acidic residues; sequence QQEERMRMESRR. Disordered stretches follow at residues 686–741 and 843–892; these read QQEE…QPNH and RGSI…LASL. The residue at position 863 (Tyr-863) is a Phosphotyrosine. Residue Ser-911 is modified to Phosphoserine. Tyr-926 carries the post-translational modification Phosphotyrosine.

Belongs to the protein kinase superfamily. Tyr protein kinase family. FAK subfamily. Interacts with ARHGAP26, GRB7, DCC, PIK3R1, PXN and SRC. Interacts with the ARP2/3 complex. Phosphorylated on tyrosine residues upon activation, e.g. upon integrin signaling. Tyr-397 is the major autophosphorylation site, but other kinases can also phosphorylate this residue. Phosphorylation at Tyr-397 promotes interaction with SRC and SRC family members, leading to phosphorylation at Tyr-576, Tyr-577 and at additional tyrosine residues. Isoform 2 is phosphorylated on serine or threonine residues, but apparently not on tyrosine residues.

Its subcellular location is the cell junction. It localises to the focal adhesion. It is found in the cell membrane. The protein resides in the cytoplasm. The protein localises to the perinuclear region. Its subcellular location is the cell cortex. It localises to the cytoskeleton. It is found in the microtubule organizing center. The protein resides in the centrosome. The protein localises to the nucleus. Its subcellular location is the cilium basal body. It carries out the reaction L-tyrosyl-[protein] + ATP = O-phospho-L-tyrosyl-[protein] + ADP + H(+). Subject to autoinhibition, mediated by interactions between the FERM domain and the kinase domain. Activated by autophosphorylation at Tyr-397. This promotes interaction with SRC and phosphorylation at Tyr-576 and Tyr-577 in the kinase activation loop. Phosphorylation at Tyr-576 and Tyr-577 is required for maximal kinase activity. Inhibited by TAE226. In terms of biological role, non-receptor protein-tyrosine kinase that plays an essential role in regulating cell migration, adhesion, spreading, reorganization of the actin cytoskeleton, formation and disassembly of focal adhesions and cell protrusions, cell cycle progression, cell proliferation and apoptosis. Required for early embryonic development, embryonic angiogenesis, normal cardiomyocyte migration and proliferation, and normal heart development. Regulates axon growth and neuronal cell migration, axon branching and synapse formation; required for normal development of the nervous system. Plays a role in osteogenesis and differentiation of osteoblasts. Functions in integrin signal transduction, but also in signaling downstream of numerous growth factor receptors, G-protein coupled receptors (GPCR), ephrin receptors, netrin receptors and LDL receptors. Forms multisubunit signaling complexes with SRC and SRC family members upon activation; this leads to the phosphorylation of additional tyrosine residues, creating binding sites for scaffold proteins, effectors and substrates. Regulates numerous signaling pathways. Promotes activation of phosphatidylinositol 3-kinase and the AKT1 signaling cascade. Promotes activation of MAPK1/ERK2, MAPK3/ERK1 and the MAP kinase signaling cascade. Promotes localized and transient activation of guanine nucleotide exchange factors (GEFs) and GTPase-activating proteins (GAPs), and thereby modulates the activity of Rho family GTPases. Signaling via CAS family members mediates activation of RAC1. Regulates P53/TP53 activity and stability. Phosphorylates SRC; this increases SRC kinase activity. Isoform 2 (FRNK) does not contain a kinase domain and inhibits PTK2/FAK1 phosphorylation and signaling. The chain is Focal adhesion kinase 1 (PTK2) from Gallus gallus (Chicken).